A 315-amino-acid chain; its full sequence is Methionyl-tRNA formyltransferase (315 aa).

Residue 113-116 (SLLP) participates in (6S)-5,6,7,8-tetrahydrofolate binding.

Belongs to the Fmt family.

The catalysed reaction is L-methionyl-tRNA(fMet) + (6R)-10-formyltetrahydrofolate = N-formyl-L-methionyl-tRNA(fMet) + (6S)-5,6,7,8-tetrahydrofolate + H(+). Attaches a formyl group to the free amino group of methionyl-tRNA(fMet). The formyl group appears to play a dual role in the initiator identity of N-formylmethionyl-tRNA by promoting its recognition by IF2 and preventing the misappropriation of this tRNA by the elongation apparatus. The chain is Methionyl-tRNA formyltransferase from Escherichia coli O17:K52:H18 (strain UMN026 / ExPEC).